A 457-amino-acid chain; its full sequence is Senescence-associated protein OSA15, chloroplastic (457 aa).

Residues 1 to 57 constitute a chloroplast transit peptide; that stretch reads MATRIPGTVAASGVYYNDQYRMPCKLKGIHCMALNCIPQKAKVRKCMNGYQSTFRFC.

The protein belongs to the ATA15/OSA15 family. In terms of tissue distribution, expressed in leaves (at protein level).

It is found in the plastid. The protein resides in the chloroplast. Functionally, may be involved in the regulation of leaf senescence. The chain is Senescence-associated protein OSA15, chloroplastic from Oryza sativa subsp. japonica (Rice).